The chain runs to 239 residues: Purine nucleoside phosphorylase DeoD-type (239 aa).

His5 contacts a purine D-ribonucleoside. Phosphate-binding positions include Gly21, Arg25, Arg44, and 88–91; that span reads RVGS. A purine D-ribonucleoside contacts are provided by residues 180-182 and 204-205; these read EME and SD. The active-site Proton donor is Asp205.

It belongs to the PNP/UDP phosphorylase family. Homohexamer; trimer of homodimers.

It carries out the reaction a purine D-ribonucleoside + phosphate = a purine nucleobase + alpha-D-ribose 1-phosphate. It catalyses the reaction a purine 2'-deoxy-D-ribonucleoside + phosphate = a purine nucleobase + 2-deoxy-alpha-D-ribose 1-phosphate. Functionally, catalyzes the reversible phosphorolytic breakdown of the N-glycosidic bond in the beta-(deoxy)ribonucleoside molecules, with the formation of the corresponding free purine bases and pentose-1-phosphate. This Salmonella agona (strain SL483) protein is Purine nucleoside phosphorylase DeoD-type.